The following is a 581-amino-acid chain: ATP-dependent lipid A-core flippase (581 aa).

The next 5 helical transmembrane spans lie at 15 to 35 (LWPI…ALII), 62 to 82 (ISIW…SSGF), 152 to 172 (IIGL…VLII), 252 to 272 (IIIQ…SSLP), and 274 to 294 (IIDE…IALM). Residues 27–309 (IISIVALIIN…LTNVNANFQK (283 aa)) enclose the ABC transmembrane type-1 domain. The region spanning 341-577 (IKFKNITFTY…KGVYAQIYRL (237 aa)) is the ABC transporter domain. 375–382 (GSSGAGKS) serves as a coordination point for ATP.

The protein belongs to the ABC transporter superfamily. Lipid exporter (TC 3.A.1.106) family. As to quaternary structure, homodimer.

The protein localises to the cell membrane. It carries out the reaction ATP + H2O + lipid A-core oligosaccharideSide 1 = ADP + phosphate + lipid A-core oligosaccharideSide 2.. Functionally, involved in lipopolysaccharide (LPS) biosynthesis. Translocates lipid A-core from the inner to the outer leaflet of the inner membrane. Transmembrane domains (TMD) form a pore in the inner membrane and the ATP-binding domain (NBD) is responsible for energy generation. This is ATP-dependent lipid A-core flippase from Wigglesworthia glossinidia brevipalpis.